The chain runs to 232 residues: 7-cyano-7-deazaguanine synthase (232 aa).

8-18 (LSGGLDSATVL) lines the ATP pocket. C188, C198, C201, and C204 together coordinate Zn(2+).

The protein belongs to the QueC family. Requires Zn(2+) as cofactor.

The enzyme catalyses 7-carboxy-7-deazaguanine + NH4(+) + ATP = 7-cyano-7-deazaguanine + ADP + phosphate + H2O + H(+). It participates in purine metabolism; 7-cyano-7-deazaguanine biosynthesis. Functionally, catalyzes the ATP-dependent conversion of 7-carboxy-7-deazaguanine (CDG) to 7-cyano-7-deazaguanine (preQ(0)). This chain is 7-cyano-7-deazaguanine synthase, found in Nitrosospira multiformis (strain ATCC 25196 / NCIMB 11849 / C 71).